The following is a 214-amino-acid chain: External core antigen (214 aa).

The N-terminal stretch at Met1–Ala19 is a signal peptide. The interval Gly25 to Leu27 is HBEAG. Positions Asn165–Cys214 are disordered. Residues Val178–Ser207 are compositionally biased toward basic residues. One copy of the 1; half-length repeat lies at Ser186–Pro192. Residues Ser186 to Gln208 form a 3 X 8 AA repeats of S-P-R-R-R-R-S-Q region. A propeptide spanning residues Ser186–Cys214 is cleaved from the precursor. 2 repeat units span residues Ser193–Gln200 and Ser201–Gln208.

The protein belongs to the orthohepadnavirus precore antigen family. In terms of assembly, homodimerizes. Phosphorylated. Post-translationally, cleaved by host furin.

The protein localises to the secreted. Its subcellular location is the host nucleus. Functionally, may regulate immune response to the intracellular capsid in acting as a T-cell tolerogen, by having an immunoregulatory effect which prevents destruction of infected cells by cytotoxic T-cells. This immune regulation may predispose to chronicity during perinatal infections and prevent severe liver injury during adult infections. This is External core antigen from Hepatitis B virus genotype A2 subtype adw2 (isolate Germany/991/1990) (HBV-A).